The sequence spans 246 residues: UDP-N-acetyl-D-mannosaminuronic acid transferase (246 aa).

The protein belongs to the glycosyltransferase 26 family.

It catalyses the reaction UDP-N-acetyl-alpha-D-mannosaminouronate + N-acetyl-alpha-D-glucosaminyl-di-trans,octa-cis-undecaprenyl diphosphate = beta-D-ManNAcA-(1-&gt;4)-alpha-D-GlcNAc-di-trans,octa-cis-undecaprenyl diphosphate + UDP + H(+). The protein operates within bacterial outer membrane biogenesis; enterobacterial common antigen biosynthesis. Functionally, catalyzes the synthesis of Und-PP-GlcNAc-ManNAcA (Lipid II), the second lipid-linked intermediate involved in enterobacterial common antigen (ECA) synthesis. The protein is UDP-N-acetyl-D-mannosaminuronic acid transferase of Salmonella dublin (strain CT_02021853).